Here is a 124-residue protein sequence, read N- to C-terminus: Large ribosomal subunit protein eL22 (124 aa).

This sequence belongs to the eukaryotic ribosomal protein eL22 family. Component of the large ribosomal subunit. Mature ribosomes consist of a small (40S) and a large (60S) subunit. The 40S subunit contains about 32 different proteins and 1 molecule of RNA (18S). The 60S subunit contains 45 different proteins and 3 molecules of RNA (25S, 5.8S and 5S).

It is found in the cytoplasm. Its function is as follows. Component of the ribosome, a large ribonucleoprotein complex responsible for the synthesis of proteins in the cell. The small ribosomal subunit (SSU) binds messenger RNAs (mRNAs) and translates the encoded message by selecting cognate aminoacyl-transfer RNA (tRNA) molecules. The large subunit (LSU) contains the ribosomal catalytic site termed the peptidyl transferase center (PTC), which catalyzes the formation of peptide bonds, thereby polymerizing the amino acids delivered by tRNAs into a polypeptide chain. The nascent polypeptides leave the ribosome through a tunnel in the LSU and interact with protein factors that function in enzymatic processing, targeting, and the membrane insertion of nascent chains at the exit of the ribosomal tunnel. In Candida albicans (strain SC5314 / ATCC MYA-2876) (Yeast), this protein is Large ribosomal subunit protein eL22.